The sequence spans 329 residues: Ribosomal RNA small subunit methyltransferase C (329 aa).

This sequence belongs to the methyltransferase superfamily. RsmC family. Monomer.

The protein resides in the cytoplasm. The catalysed reaction is guanosine(1207) in 16S rRNA + S-adenosyl-L-methionine = N(2)-methylguanosine(1207) in 16S rRNA + S-adenosyl-L-homocysteine + H(+). Functionally, specifically methylates the guanine in position 1207 of 16S rRNA in the 30S particle. The sequence is that of Ribosomal RNA small subunit methyltransferase C from Haemophilus ducreyi (strain 35000HP / ATCC 700724).